Here is a 30-residue protein sequence, read N- to C-terminus: Non-toxic phospholipase A2 (30 aa).

The Ca(2+) site is built by Tyr-26, Gly-28, and Gly-30.

Belongs to the phospholipase A2 family. Group I subfamily. In terms of assembly, homodimer. Ca(2+) serves as cofactor. Post-translationally, glycosylated. As to expression, expressed by the venom gland.

The protein localises to the secreted. It carries out the reaction a 1,2-diacyl-sn-glycero-3-phosphocholine + H2O = a 1-acyl-sn-glycero-3-phosphocholine + a fatty acid + H(+). With respect to regulation, enzymatic activity is diminished by Cd(2+) and Hg(2+). Relatively highly potent phospholipase A2 that displays potent antimicrobial and hemolytic activities. It does not show cytotoxic effects on the three human cell lines tested. PLA2 catalyzes the calcium-dependent hydrolysis of the 2-acyl groups in 3-sn-phosphoglycerides. It shows similar potencies on both Gram-negative and Gram-positive bacteria: B.cereus (MIC&gt;9 ug/ml), B.subtilis (MIC&gt;12 ug/ml), E.faecalis (MIC&gt;7 ug/ml), S.epidermidis (MIC&gt;12 ug/ml), S.aureux (MIC&gt;5 ug/ml), E.coli (MIC&gt;7 ug/ml), K.pneumonia (MIC&gt;8 ug/ml), P.aeruginosa (MIC&gt;10 ug/ml), and S.enteric (MIC&gt;9 ug/ml). It also shows antifungal activities: A.niger (MIC&gt;15 ug/ml), B.cinerea (MIC&gt;12 ug/ml), F.solani (MIC&gt;15 ug/ml), and P.digitatum (MIC&gt;10 ug/ml). This chain is Non-toxic phospholipase A2, found in Walterinnesia aegyptia (Desert black snake).